Consider the following 556-residue polypeptide: uncharacterized protein (556 aa).

Disordered stretches follow at residues 1–40 (MSNS…TNEN), 80–243 (NTTQ…KQSW), 278–324 (YDSD…SSLP), 363–391 (RTKQ…KFVD), and 422–525 (DSKQ…ENSA). Low complexity predominate over residues 7–25 (NNNNNTNNNNNNNNNNNGN). The span at 30–40 (EEPDDDSTNEN) shows a compositional bias: acidic residues. 2 stretches are compositionally biased toward low complexity: residues 80-133 (NTTQ…GTRS) and 164-181 (NDNN…NDSN). Residues 182-192 (IVDDDEDEEEF) show a composition bias toward acidic residues. The span at 207–226 (STSSPSSTSSPIVSPQTQTS) shows a compositional bias: low complexity. The segment covering 227–243 (KLESSMDVSPSSGKQSW) has biased composition (polar residues). Low complexity-rich tracts occupy residues 292–322 (NNSS…NSSS), 369–388 (KVQQ…NNNK), and 425–525 (QQNV…ENSA). A helical membrane pass occupies residues 528–548 (GSFIKNAVIFIFILLLMVVGF).

It localises to the membrane. This is an uncharacterized protein from Dictyostelium discoideum (Social amoeba).